Here is a 185-residue protein sequence, read N- to C-terminus: GTP cyclohydrolase 1 (185 aa).

Zn(2+) is bound by residues Cys76, His79, and Cys147.

The protein belongs to the GTP cyclohydrolase I family. As to quaternary structure, toroid-shaped homodecamer, composed of two pentamers of five dimers.

The catalysed reaction is GTP + H2O = 7,8-dihydroneopterin 3'-triphosphate + formate + H(+). The protein operates within cofactor biosynthesis; 7,8-dihydroneopterin triphosphate biosynthesis; 7,8-dihydroneopterin triphosphate from GTP: step 1/1. This chain is GTP cyclohydrolase 1, found in Clostridium perfringens (strain 13 / Type A).